Consider the following 328-residue polypeptide: P2Y purinoceptor 6 (328 aa).

Residues 1 to 27 are Extracellular-facing; it reads MEQDNGTIQAPGLPPTTCVYREDFKRL. A glycan (N-linked (GlcNAc...) asparagine) is linked at Asn5. A helical membrane pass occupies residues 28-48; sequence LLTPVYSVVLVVGLPLNICVI. Residues 49 to 62 are Cytoplasmic-facing; sequence AQICASRRTLTRSA. The chain crosses the membrane as a helical span at residues 63–83; the sequence is VYTLNLALADLMYACSLPLLI. Over 84–101 the chain is Extracellular; the sequence is YNYARGDHWPFGDLACRF. The cysteines at positions 99 and 177 are disulfide-linked. A helical membrane pass occupies residues 102–122; sequence VRFLFYANLHGSILFLTCISF. Over 123 to 144 the chain is Cytoplasmic; sequence QRYLGICHPLASWHKRGGRRAA. The chain crosses the membrane as a helical span at residues 145–165; that stretch reads WVVCGVVWLAVTAQCLPTAVF. The Extracellular portion of the chain corresponds to 166–194; it reads AATGIQRNRTVCYDLSPPILSTRYLPYGM. N-linked (GlcNAc...) asparagine glycosylation occurs at Asn173. A helical transmembrane segment spans residues 195–215; the sequence is ALTVIGFLLPFIALLACYCRM. Over 216-236 the chain is Cytoplasmic; it reads ARRLCRQDGPAGPVAQERRSK. The helical transmembrane segment at 237–257 threads the bilayer; it reads AARMAVVVAAVFAISFLPFHI. The Extracellular segment spans residues 258–280; the sequence is TKTAYLAVRSTPGVSCPVLETFA. A helical transmembrane segment spans residues 281–303; it reads AAYKGTRPFASVNSVLDPILFYF. The Cytoplasmic portion of the chain corresponds to 304-328; that stretch reads TQQKFRRQPHDLLQRLTAKWQRQRV.

It belongs to the G-protein coupled receptor 1 family.

Its subcellular location is the cell membrane. Receptor for extracellular UTP &gt; ADP = 2-methylthio-ATP &gt; ADP-beta-S &gt; ATP = ATP-gamma-S. The activity of this receptor is mediated by G proteins which activate a phosphatidylinositol-calcium second messenger system. Functionally coupled to phospholipase C. The polypeptide is P2Y purinoceptor 6 (P2ry6) (Mus musculus (Mouse)).